Consider the following 267-residue polypeptide: Phosphate import ATP-binding protein PstB 2 (267 aa).

Residues 21 to 262 enclose the ABC transporter domain; sequence LSTKDVHVYY…AKLQSTNDYV (242 aa). ATP is bound at residue 53 to 60; that stretch reads GPSGSGKS.

It belongs to the ABC transporter superfamily. Phosphate importer (TC 3.A.1.7) family. As to quaternary structure, the complex is composed of two ATP-binding proteins (PstB), two transmembrane proteins (PstC and PstA) and a solute-binding protein (PstS).

It localises to the cell membrane. The catalysed reaction is phosphate(out) + ATP + H2O = ADP + 2 phosphate(in) + H(+). Functionally, part of the ABC transporter complex PstSACB involved in phosphate import. Responsible for energy coupling to the transport system. In Streptococcus pneumoniae serotype 4 (strain ATCC BAA-334 / TIGR4), this protein is Phosphate import ATP-binding protein PstB 2.